We begin with the raw amino-acid sequence, 464 residues long: MMARRDPTSWAKRLVRAQTLQKQRRAPVGPRAPPPDEEDPRLKCKNCGAFGHTARSTRCPMKCWKAALVPATLGKKEGKENLKPWKPRVEANPGPLNKDKGEKEERPRQQDPQRKALLHMFSGKPPEKPLPNGKGSTEPSDYLRVASGPMPVHTTSKRPRVDPVLADGSATEMSDRGSVLASLSPLRKASLSSSSSLGPKERQTGAAADMPQPAVRHQGREPLLVVKPTHSRPEGGCREVPQAASKTHGLLQAARPQAQDKRPAVTSQPCPPAATHSLGLGSNLSFGPGAKRPAQAPIQACLNFPKKPRLGPFQIPESAIQGGELGAPENLQPPPAATELGPSTSPQMGRRTPAQVPSVDRQPPHSRPCLPTAQACTMSHHPAASHDGAQPLRVLFRRLENGRWSSSLLAAPSFHSPEKPGAFLAQSPHVSEKSEAPCVRVPPSVLYEDLQVSSSSEDSDSDLE.

Disordered regions lie at residues 16-42 (RAQT…DPRL), 70-389 (PATL…HDGA), and 415-437 (HSPE…SEAP). Composition is skewed to basic and acidic residues over residues 74–89 (GKKE…KPRV) and 97–114 (NKDK…DPQR). Residues 180 to 197 (LASLSPLRKASLSSSSSL) are compositionally biased toward low complexity.

This sequence belongs to the FAM90 family.

In Homo sapiens (Human), this protein is Protein FAM90A5.